The sequence spans 350 residues: Uroporphyrinogen decarboxylase (350 aa).

Residues 23 to 27 (RQAGR), aspartate 72, tyrosine 149, serine 204, and histidine 318 each bind substrate.

It belongs to the uroporphyrinogen decarboxylase family. Homodimer.

It is found in the cytoplasm. It catalyses the reaction uroporphyrinogen III + 4 H(+) = coproporphyrinogen III + 4 CO2. It participates in porphyrin-containing compound metabolism; protoporphyrin-IX biosynthesis; coproporphyrinogen-III from 5-aminolevulinate: step 4/4. Functionally, catalyzes the decarboxylation of four acetate groups of uroporphyrinogen-III to yield coproporphyrinogen-III. This chain is Uroporphyrinogen decarboxylase, found in Carboxydothermus hydrogenoformans (strain ATCC BAA-161 / DSM 6008 / Z-2901).